A 1011-amino-acid polypeptide reads, in one-letter code: Collagen alpha-2(I) chain (1011 aa).

A disordered region spans residues 1 to 1011 (SGGFDFSFLP…FGYEGDFYRA (1011 aa)). Pro-10, Pro-13, Pro-35, and Pro-41 each carry 4-hydroxyproline. A compositionally biased stretch (low complexity) spans 28-67 (LMGPRGPPGASGAPGPQGFQGPAGEPGEPGQTGPAGARGP). Residue Lys-106 is modified to 5-hydroxylysine; alternate. The O-linked (Gal...) hydroxylysine; alternate glycan is linked to Lys-106. The span at 167-182 (SVGPVGPAGPIGSAGP) shows a compositional bias: low complexity. Over residues 282 to 291 (GESGGKGEPG) the composition is skewed to gly residues. Over residues 292–302 (SAGPQGPPGSS) the composition is skewed to low complexity. Residues 323 to 332 (GLRGGPGSRG) show a composition bias toward gly residues. Residues 345 to 361 (PAGARGASGPAGVRGPS) show a composition bias toward low complexity. A 4-hydroxyproline mark is found at Pro-367 and Pro-370. The segment covering 396-415 (LPGIDGRPGPIGPAGARGEA) has biased composition (low complexity). Residues 464–473 (GVQGGKGEQG) are compositionally biased toward gly residues. Low complexity-rich tracts occupy residues 520–537 (PGESGAVGPSGAIGSRGP) and 549–559 (EPGVVGAPGTA). A compositionally biased stretch (gly residues) spans 560–578 (GPAGSGGPGERGAAGIPGG). 2 stretches are compositionally biased toward low complexity: residues 588-635 (RGEV…PRGS) and 642-662 (VGPAGPNGFAGPAGAAGQPGA). The segment covering 663 to 672 (KGERGTKGPK) has biased composition (basic and acidic residues). Residues 680–690 (PTGPVGSAGPA) are compositionally biased toward low complexity. Residues 700 to 709 (GSRGDGGPPG) show a composition bias toward gly residues. Over residues 711 to 720 (TGFPGAAGRT) the composition is skewed to low complexity. Positions 757-766 (GETGAGGPPG) are enriched in gly residues. Composition is skewed to low complexity over residues 774–801 (SGEPGTAGPPGTAGPQGLLGAPGILGLP) and 809–819 (LPGVAGAVGEP). The segment covering 820 to 834 (GPLGIGPPGARGDGL) has biased composition (gly residues). 2 stretches are compositionally biased toward low complexity: residues 843 to 856 (YAGNAGPVGAAGAP) and 872 to 887 (EPGPVGSVGPVGALGP). A compositionally biased stretch (basic and acidic residues) spans 897–908 (RGDKGEPGEKGP). A compositionally biased stretch (pro residues) spans 981–993 (SGPPGPPGPPGPP).

This sequence belongs to the fibrillar collagen family. In terms of assembly, trimers of one alpha 2(I) and two alpha 1(I) chains. Interacts (via C-terminus) with TMEM131 (via PapD-L domain); the interaction is direct and is involved in assembly and TRAPPIII ER-to-Golgi transport complex-dependent secretion of collagen. Prolines at the third position of the tripeptide repeating unit (G-X-Y) are hydroxylated in some or all of the chains. Expressed in bones.

It localises to the secreted. The protein localises to the extracellular space. Its subcellular location is the extracellular matrix. Type I collagen is a member of group I collagen (fibrillar forming collagen). This Neocnus comes (Miller's Hispaniolan ground sloth) protein is Collagen alpha-2(I) chain.